The primary structure comprises 317 residues: ATP synthase gamma chain (317 aa).

This sequence belongs to the ATPase gamma chain family. As to quaternary structure, F-type ATPases have 2 components, CF(1) - the catalytic core - and CF(0) - the membrane proton channel. CF(1) has five subunits: alpha(3), beta(3), gamma(1), delta(1), epsilon(1). CF(0) has three main subunits: a, b and c.

It localises to the cellular thylakoid membrane. In terms of biological role, produces ATP from ADP in the presence of a proton gradient across the membrane. The gamma chain is believed to be important in regulating ATPase activity and the flow of protons through the CF(0) complex. This is ATP synthase gamma chain from Synechococcus sp. (strain CC9311).